Reading from the N-terminus, the 461-residue chain is Fumarate hydratase class II (461 aa).

Substrate is bound by residues 99–101 (SGT), Arg-127, 130–133 (HPND), 140–142 (SSN), and Thr-188. The active-site Proton donor/acceptor is the His-189. Ser-319 is a catalytic residue. Residues Ser-320 and 325–327 (KVN) each bind substrate.

This sequence belongs to the class-II fumarase/aspartase family. Fumarase subfamily. Homotetramer.

It is found in the cytoplasm. It carries out the reaction (S)-malate = fumarate + H2O. Its pathway is carbohydrate metabolism; tricarboxylic acid cycle; (S)-malate from fumarate: step 1/1. In terms of biological role, involved in the TCA cycle. Catalyzes the stereospecific interconversion of fumarate to L-malate. This chain is Fumarate hydratase class II, found in Chromobacterium violaceum (strain ATCC 12472 / DSM 30191 / JCM 1249 / CCUG 213 / NBRC 12614 / NCIMB 9131 / NCTC 9757 / MK).